The following is a 139-amino-acid chain: MNRDIGKSAERELVSILRSEGFNAVRIPTSNSSPNPLPDIFATKGNILLAIECKSTWEHKVKVKDRQVIKLFEFLSMFTMEGRALIAVKFKEIHKWKVMEIREIKEVEVTVDNSIFLENYISQFLENYIPQAGRELSKL.

E10, D39, and E52 together coordinate Mg(2+).

It belongs to the Holliday junction resolvase Hjc family. Hje subfamily. As to quaternary structure, homodimer. Mg(2+) is required as a cofactor.

It catalyses the reaction Endonucleolytic cleavage at a junction such as a reciprocal single-stranded crossover between two homologous DNA duplexes (Holliday junction).. Its function is as follows. A structure-specific endonuclease that resolves Holliday junction (HJ) intermediates during genetic recombination. Acts only on 4-way DNA junctions in a sequence non-specific manner; introduces paired nicks in opposing strands 2 bases 3' of the point of strand exchange only on continuous strands of 4-way junction DNA. Cleaves both mobile and immobile junctions. In terms of biological role, redundant function with Holliday junction resolvase Hjc. This is Crossover junction endodeoxyribonuclease Hje from Sulfolobus acidocaldarius (strain ATCC 33909 / DSM 639 / JCM 8929 / NBRC 15157 / NCIMB 11770).